Here is a 301-residue protein sequence, read N- to C-terminus: MGAQLSTLGHVVLSPVWFLYSLIMKLFQRSTPAITLENPDIKYPLRLIDKEVISHDTRRFRFALPSPEHILGLPVGQHIYLSARIDGNLVIRPYTPVSSDDDKGFVDLVIKVYFKDTHPKFPAGGKMSQYLESMKIGDTIEFRGPNGLLVYQGKGKFAIRPDKKSDPVIKTVKSVGMIAGGTGITPMLQVIRAIMKDPDDHTVCHLLFANQTEKDILLRPELEELRNEHSARFKLWYTVDKAPEAWDYSQGFVNEEMIRDHLPPPEEEPLVLMCGPPPMIQYACLPNLDRVGHPKERCFAF.

Residue Gly-2 is the site of N-myristoyl glycine attachment. Residues 40–152 (DIKYPLRLID…RGPNGLLVYQ (113 aa)) enclose the FAD-binding FR-type domain. N6-acetyllysine is present on Lys-42. Tyr-43 carries the phosphotyrosine modification. Residue Lys-50 is modified to N6-acetyllysine. Arg-92, Pro-93, Tyr-94, Val-109, Lys-111, and Phe-114 together coordinate FAD. Lys-120 carries the post-translational modification N6-acetyllysine. The FAD site is built by Lys-126, Met-127, Ser-128, and Thr-185.

It belongs to the flavoprotein pyridine nucleotide cytochrome reductase family. Component of a complex composed of cytochrome b5, NADH-cytochrome b5 reductase (CYB5R3) and MTARC2. Interacts with MTLN; the interaction is required to maintain cellular lipid composition and leads to stimulation of mitochondrial respiratory complex I activity. FAD is required as a cofactor.

It localises to the endoplasmic reticulum membrane. Its subcellular location is the mitochondrion outer membrane. The catalysed reaction is 2 Fe(III)-[cytochrome b5] + NADH = 2 Fe(II)-[cytochrome b5] + NAD(+) + H(+). Its function is as follows. Catalyzes the reduction of two molecules of cytochrome b5 using NADH as the electron donor. The polypeptide is NADH-cytochrome b5 reductase 3 (CYB5R3) (Bos taurus (Bovine)).